The chain runs to 239 residues: Ribosomal RNA small subunit methyltransferase G (239 aa).

Residues Gly-78, Phe-83, 129 to 130 (AE), and Arg-148 contribute to the S-adenosyl-L-methionine site.

It belongs to the methyltransferase superfamily. RNA methyltransferase RsmG family.

Its subcellular location is the cytoplasm. Its function is as follows. Specifically methylates the N7 position of a guanine in 16S rRNA. The polypeptide is Ribosomal RNA small subunit methyltransferase G (Alkaliphilus oremlandii (strain OhILAs) (Clostridium oremlandii (strain OhILAs))).